Reading from the N-terminus, the 166-residue chain is Ribosome-binding factor A (166 aa).

Residues Val-119–His-166 are disordered. Acidic residues predominate over residues Glu-143–Asp-154.

It belongs to the RbfA family. As to quaternary structure, monomer. Binds 30S ribosomal subunits, but not 50S ribosomal subunits or 70S ribosomes.

It localises to the cytoplasm. Its function is as follows. One of several proteins that assist in the late maturation steps of the functional core of the 30S ribosomal subunit. Associates with free 30S ribosomal subunits (but not with 30S subunits that are part of 70S ribosomes or polysomes). Required for efficient processing of 16S rRNA. May interact with the 5'-terminal helix region of 16S rRNA. The protein is Ribosome-binding factor A of Clavibacter michiganensis subsp. michiganensis (strain NCPPB 382).